A 498-amino-acid polypeptide reads, in one-letter code: ATP synthase subunit beta, chloroplastic (498 aa).

172 to 179 (GGAGVGKT) provides a ligand contact to ATP.

Belongs to the ATPase alpha/beta chains family. F-type ATPases have 2 components, CF(1) - the catalytic core - and CF(0) - the membrane proton channel. CF(1) has five subunits: alpha(3), beta(3), gamma(1), delta(1), epsilon(1). CF(0) has four main subunits: a(1), b(1), b'(1) and c(9-12).

It localises to the plastid. The protein resides in the chloroplast thylakoid membrane. It carries out the reaction ATP + H2O + 4 H(+)(in) = ADP + phosphate + 5 H(+)(out). Its function is as follows. Produces ATP from ADP in the presence of a proton gradient across the membrane. The catalytic sites are hosted primarily by the beta subunits. This is ATP synthase subunit beta, chloroplastic from Aspidistra elatior (Cast-iron plant).